A 454-amino-acid polypeptide reads, in one-letter code: Glutaredoxin domain-containing cysteine-rich protein CG31559 (454 aa).

Disordered regions lie at residues E30–K88 and R217–S239. Over residues D33–L45 the composition is skewed to polar residues. The segment covering S58–S69 has biased composition (low complexity). The span at T70–R84 shows a compositional bias: polar residues. Over residues R217–H227 the composition is skewed to basic and acidic residues. The region spanning N295 to A400 is the Glutaredoxin domain.

The protein belongs to the GRXCR1 family.

The chain is Glutaredoxin domain-containing cysteine-rich protein CG31559 from Drosophila melanogaster (Fruit fly).